Here is a 132-residue protein sequence, read N- to C-terminus: Small ribosomal subunit protein uS8 (132 aa).

The protein belongs to the universal ribosomal protein uS8 family. In terms of assembly, part of the 30S ribosomal subunit. Contacts proteins S5 and S12.

One of the primary rRNA binding proteins, it binds directly to 16S rRNA central domain where it helps coordinate assembly of the platform of the 30S subunit. This Corynebacterium diphtheriae (strain ATCC 700971 / NCTC 13129 / Biotype gravis) protein is Small ribosomal subunit protein uS8.